Reading from the N-terminus, the 715-residue chain is Fatty acid oxidation complex subunit alpha (715 aa).

The interval 1-190 (MTTTSAFMLN…KAGLVDDVVP (190 aa)) is enoyl-CoA hydratase. Positions 306–715 (GPLNSVGILG…WTNGETDQGN (410 aa)) are 3-hydroxyacyl-CoA dehydrogenase.

It in the N-terminal section; belongs to the enoyl-CoA hydratase/isomerase family. This sequence in the central section; belongs to the 3-hydroxyacyl-CoA dehydrogenase family. As to quaternary structure, heterotetramer of two alpha chains (FadJ) and two beta chains (FadI).

The protein resides in the cytoplasm. It carries out the reaction a (3S)-3-hydroxyacyl-CoA = a (2E)-enoyl-CoA + H2O. It catalyses the reaction a 4-saturated-(3S)-3-hydroxyacyl-CoA = a (3E)-enoyl-CoA + H2O. The enzyme catalyses a (3S)-3-hydroxyacyl-CoA + NAD(+) = a 3-oxoacyl-CoA + NADH + H(+). The catalysed reaction is (3S)-3-hydroxybutanoyl-CoA = (3R)-3-hydroxybutanoyl-CoA. It functions in the pathway lipid metabolism; fatty acid beta-oxidation. Functionally, catalyzes the formation of a hydroxyacyl-CoA by addition of water on enoyl-CoA. Also exhibits 3-hydroxyacyl-CoA epimerase and 3-hydroxyacyl-CoA dehydrogenase activities. This chain is Fatty acid oxidation complex subunit alpha, found in Salmonella newport (strain SL254).